Consider the following 984-residue polypeptide: UPF0592 protein YDL073W (984 aa).

The disordered stretch occupies residues 675 to 712 (KNHKIMDGYEGGQENEDNDEDSEDSGSHKNKRKEGNSS). Acidic residues predominate over residues 687-698 (QENEDNDEDSED).

It belongs to the UPF0592 family.

The polypeptide is UPF0592 protein YDL073W (Saccharomyces cerevisiae (strain ATCC 204508 / S288c) (Baker's yeast)).